Here is a 171-residue protein sequence, read N- to C-terminus: Adenine phosphoribosyltransferase (171 aa).

Belongs to the purine/pyrimidine phosphoribosyltransferase family. Homodimer.

Its subcellular location is the cytoplasm. It carries out the reaction AMP + diphosphate = 5-phospho-alpha-D-ribose 1-diphosphate + adenine. It participates in purine metabolism; AMP biosynthesis via salvage pathway; AMP from adenine: step 1/1. In terms of biological role, catalyzes a salvage reaction resulting in the formation of AMP, that is energically less costly than de novo synthesis. In Mycoplasma mobile (strain ATCC 43663 / 163K / NCTC 11711) (Mesomycoplasma mobile), this protein is Adenine phosphoribosyltransferase.